The chain runs to 341 residues: Ribonucleoside-diphosphate reductase small chain A (341 aa).

The tract at residues 1–20 (MGSLKEGQGRDMEEGESEEP) is disordered. Residues Asp-87, Glu-118, and His-121 each coordinate Fe cation. Tyr-125 is an active-site residue. Fe cation is bound by residues Glu-180, Glu-214, and His-217.

It belongs to the ribonucleoside diphosphate reductase small chain family. In terms of assembly, homodimer and heterodimer with TSO2. Heterotetramer of two R1 and two R2 chains. A radical transfer pathway may occur between Tyr-125 of protein R2 and R1. Homodimer contains a dinuclear non-heme iron center and a stable tyrosyl radical essential for activity. A transfer pathway may occur between Tyr-125 of protein R2 and R1. Interacts with CSN7. Fe cation serves as cofactor. Expressed in rosette leaves, cauline leaves, stems and flowers.

The protein localises to the cytoplasm. It carries out the reaction a 2'-deoxyribonucleoside 5'-diphosphate + [thioredoxin]-disulfide + H2O = a ribonucleoside 5'-diphosphate + [thioredoxin]-dithiol. With respect to regulation, inhibited by phenol, paracetamol, 2,4,6-trimethylphenol, resveratrol, furfuryl mercaptan, 2-thiophenthiol, phenylhydrazine, and hydroxyurea. Provides the precursors necessary for DNA synthesis. Catalyzes the biosynthesis of deoxyribonucleotides from the corresponding ribonucleotides. This is Ribonucleoside-diphosphate reductase small chain A (RNR2A) from Arabidopsis thaliana (Mouse-ear cress).